The primary structure comprises 279 residues: Reaction center protein L chain (279 aa).

3 helical membrane passes run 33–56 (GFFG…GASQ), 85–113 (GLWQ…RKLG), and 116–141 (YHVP…ILMG). Residues His154 and His174 each coordinate (7R,8Z)-bacteriochlorophyll b. A helical transmembrane segment spans residues 171–200 (NPAHMLAITFFFTTTLAMSMHGGLILSAAN). A Fe cation-binding site is contributed by His191. Residue Phe217 participates in a ubiquinone binding. Residues 226–252 (GSLGIHRLGLFLALSAAFWSAVCIVIS) traverse the membrane as a helical segment. His231 lines the Fe cation pocket.

It belongs to the reaction center PufL/M/PsbA/D family. As to quaternary structure, reaction center is composed of four bacteriochlorophylls, two bacteriopheophytins, two ubiquinones, one iron, and three highly hydrophobic polypeptide chains (designated L, M, and H).

The protein resides in the cell inner membrane. Functionally, the reaction center is a membrane-bound complex that mediates the initial photochemical event in the electron transfer process of photosynthesis. The sequence is that of Reaction center protein L chain (pufL) from Rubrivivax gelatinosus (strain NBRC 100245 / IL144).